A 261-amino-acid chain; its full sequence is Glucanase inhibitor protein 3 (261 aa).

The first 21 residues, 1 to 21, serve as a signal peptide directing secretion; that stretch reads MKVLSSLAAALIALSAVDVEA. The Peptidase S1 domain occupies 29–260; the sequence is ILGGGKVPVG…GIEWINSVIK (232 aa). Cysteine 56 and cysteine 72 are oxidised to a cystine. Asparagine 108 carries N-linked (GlcNAc...) asparagine glycosylation. 2 disulfide bridges follow: cysteine 183/cysteine 195 and cysteine 205/cysteine 236.

It belongs to the peptidase S1 family.

Its subcellular location is the secreted. In terms of biological role, secreted effector that suppresses host plant glucan elicitor-mediated defense responses. Targets host endoglucanases and inhibits the endoglucanase-mediated release of elicitor-active glucan oligosaccharides from P.sojae cell walls. The protein is Glucanase inhibitor protein 3 (GIP3) of Phytophthora sojae (strain P6497) (Soybean stem and root rot agent).